Reading from the N-terminus, the 614-residue chain is Probable ATP-dependent RNA helicase DDX5 (614 aa).

A compositionally biased stretch (basic and acidic residues) spans 1-15 (MSSYSSDRDRGRDRG). The disordered stretch occupies residues 1–39 (MSSYSSDRDRGRDRGFGAPRFGGSRTGPLSGKKFGNPGE). The residue at position 24 (Ser-24) is a Phosphoserine. Position 32 is an N6-acetyllysine; alternate (Lys-32). Residue Lys-32 forms a Glycyl lysine isopeptide (Lys-Gly) (interchain with G-Cter in SUMO2); alternate linkage. 2 positions are modified to N6-acetyllysine: Lys-33 and Lys-40. Residue Lys-45 forms a Glycyl lysine isopeptide (Lys-Gly) (interchain with G-Cter in SUMO2) linkage. Lys-53 is covalently cross-linked (Glycyl lysine isopeptide (Lys-Gly) (interchain with G-Cter in SUMO2); alternate). A Glycyl lysine isopeptide (Lys-Gly) (interchain with G-Cter in SUMO); alternate cross-link involves residue Lys-53. Lys-53 participates in a covalent cross-link: Glycyl lysine isopeptide (Lys-Gly) (interchain with G-Cter in SUMO1); alternate. The short motif at 94-122 (LNFYEANFPANVMDVIARQNFTEPTAIQA) is the Q motif element. Residues 114–116 (FTE), Gln-121, and 138–145 (AQTGSGKT) contribute to the ATP site. The Helicase ATP-binding domain maps to 125 to 300 (WPVALSGLDM…EDFLKDYIHI (176 aa)). Residue Lys-236 is modified to N6-acetyllysine. Residues 248–251 (DEAD) carry the DEAD box motif. Tyr-297 is subject to Phosphotyrosine. A Helicase C-terminal domain is found at 328-475 (KLIRLMEEIM…AINPKLLQLV (148 aa)). Glycyl lysine isopeptide (Lys-Gly) (interchain with G-Cter in SUMO2) cross-links involve residues Lys-340, Lys-343, Lys-388, Lys-391, Lys-411, Lys-437, Lys-451, and Lys-470. The disordered stretch occupies residues 477-504 (DRGSGRSRGRGGMKDDRRDRYSAGKRGG). Residues 477-614 (DRGSGRSRGR…GYPMPTGYSQ (138 aa)) are transactivation domain. Ser-480 carries the phosphoserine modification. Basic and acidic residues predominate over residues 488-498 (GMKDDRRDRYS). Lys-523 participates in a covalent cross-link: Glycyl lysine isopeptide (Lys-Gly) (interchain with G-Cter in SUMO2).

The protein belongs to the DEAD box helicase family. DDX5/DBP2 subfamily. Identified in the spliceosome C complex. Component of a ribonucleoprotein complex containing mRNAs and RNA-binding proteins including DDX5, HNRNPH2 and SRSF1 as well as splicing regulator ARVCF. Interacts with RBM4; the interaction occurs in an RNA-independent manner. Interacts with AGO1 and AGO2. Interacts with ESR1, AR, EP300, CREBBP, POLR2A, TP53, RUNX2 and HDAC1. Self-associates. Interacts with DDX17. Interacts with BRDT. The large PER complex involved in the repression of transcriptional termination is composed of at least PER2, CDK9, DDX5, DHX9, NCBP1 and POLR2A (active). Interacts with DHX36; this interaction occurs in a RNA-dependent manner. Interacts with NUPR1. Interacts with ERCC6. Interacts with DDX3X in the cytoplasm; this interaction may be more efficient when both proteins are unphosphorylated. Sumoylated; sumoylation, promoted by PIAS1, promotes interaction with HDAC1 and transcriptional repression activity. Sumoylation also significantly increases stability, and reduces polyubiquitination. Post-translationally, polyubiquitinated, leading to proteasomal degradation. In terms of processing, weakly phosphorylated in the G1/S phase of the cell cycle and much more at G2/M, especially at Thr and Tyr residues.

It is found in the nucleus. It localises to the nucleolus. The protein resides in the cytoplasm. The catalysed reaction is ATP + H2O = ADP + phosphate + H(+). Functionally, involved in the alternative regulation of pre-mRNA splicing; its RNA helicase activity is necessary for increasing tau exon 10 inclusion and occurs in a RBM4-dependent manner. Binds to the tau pre-mRNA in the stem-loop region downstream of exon 10. The rate of ATP hydrolysis is highly stimulated by single-stranded RNA. Involved in transcriptional regulation; the function is independent of the RNA helicase activity. Transcriptional coactivator for androgen receptor AR but probably not ESR1. Synergizes with DDX17 and SRA1 RNA to activate MYOD1 transcriptional activity and involved in skeletal muscle differentiation. Transcriptional coactivator for p53/TP53 and involved in p53/TP53 transcriptional response to DNA damage and p53/TP53-dependent apoptosis. Transcriptional coactivator for RUNX2 and involved in regulation of osteoblast differentiation. Acts as a transcriptional repressor in a promoter-specific manner; the function probably involves association with histone deacetylases, such as HDAC1. As component of a large PER complex is involved in the inhibition of 3' transcriptional termination of circadian target genes such as PER1 and NR1D1 and the control of the circadian rhythms. The polypeptide is Probable ATP-dependent RNA helicase DDX5 (Ddx5) (Mus musculus (Mouse)).